The chain runs to 204 residues: Secreted phosphoprotein 24 (204 aa).

Positions 1–23 are cleaved as a signal peptide; it reads MEKRAMRMLAMFVLGTSFWSCAG. Intrachain disulfides connect C86–C97 and C110–C128. S90 bears the Phosphoserine mark. Residues S138, S139, S166, and S175 each carry the phosphoserine modification. The disordered stretch occupies residues 179–204; that stretch reads MRRFPPPGNRSFPNQWPRARTNTGFE.

This sequence belongs to the SPP2 family. In terms of processing, multiply phosphorylated at serine residues. Post-translationally, phosphorylation sites are present in the extracellular medium.

It is found in the secreted. Could coordinate an aspect of bone turnover. The sequence is that of Secreted phosphoprotein 24 (SPP2) from Sus scrofa (Pig).